The sequence spans 207 residues: Small heat shock protein hspG7 (207 aa).

Residues 30–207 (KTIIDILPPM…YSNTIKININ (178 aa)) form the sHSP domain. Composition is skewed to low complexity over residues 84–101 (QQQQ…SSST) and 122–135 (STTS…ATTT). The disordered stretch occupies residues 84–149 (QQQQLVIEKS…EDENKTKSSD (66 aa)). The segment covering 136–149 (KENKEDENKTKSSD) has biased composition (basic and acidic residues).

Belongs to the small heat shock protein (HSP20) family.

The sequence is that of Small heat shock protein hspG7 (hspG7) from Dictyostelium discoideum (Social amoeba).